A 192-amino-acid chain; its full sequence is dTTP/UTP pyrophosphatase (192 aa).

D70 serves as the catalytic Proton acceptor.

The protein belongs to the Maf family. YhdE subfamily. A divalent metal cation is required as a cofactor.

It localises to the cytoplasm. It carries out the reaction dTTP + H2O = dTMP + diphosphate + H(+). The enzyme catalyses UTP + H2O = UMP + diphosphate + H(+). Its function is as follows. Nucleoside triphosphate pyrophosphatase that hydrolyzes dTTP and UTP. May have a dual role in cell division arrest and in preventing the incorporation of modified nucleotides into cellular nucleic acids. In Clostridium perfringens (strain ATCC 13124 / DSM 756 / JCM 1290 / NCIMB 6125 / NCTC 8237 / Type A), this protein is dTTP/UTP pyrophosphatase.